A 291-amino-acid polypeptide reads, in one-letter code: MAITASMVKELRDTTGAGMMDAKKALTETDGDMDAAVDWLRTKGLAKAAKKSGRTAAEGLVAVAVSGSTGVAVEVNSETDFVGKNAEFQEMVAGIAQVALGADDTEALLAADMGGKSVADTVTAKVATIGENMGVRRMAKLEGDIVVSYVHNAAADGMGKIGVLIATKGGDAGFAKQVAMHVAAVNPASLDEASVDPEMVEKERQVQIDIARESGKPEQVIEKMIVGRMKKYLSEITLVNQAFVVNPDLTVGEAAKEASAEITGFVRLEVGEGIEKKVENFAEEVAKTAKG.

The segment at 79 to 82 (TDFV) is involved in Mg(2+) ion dislocation from EF-Tu.

Belongs to the EF-Ts family.

The protein resides in the cytoplasm. Functionally, associates with the EF-Tu.GDP complex and induces the exchange of GDP to GTP. It remains bound to the aminoacyl-tRNA.EF-Tu.GTP complex up to the GTP hydrolysis stage on the ribosome. The protein is Elongation factor Ts of Jannaschia sp. (strain CCS1).